The chain runs to 425 residues: Aromatic prenyl transferase ptmE (425 aa).

L-tryptophan contacts are provided by residues 83 to 84 (GI) and E92. 9 residues coordinate substrate: R107, K198, Y200, R265, K267, Y269, Y345, Y410, and Y414.

It belongs to the tryptophan dimethylallyltransferase family. In terms of assembly, homodimer.

Its pathway is secondary metabolite biosynthesis. In terms of biological role, aromatic prenyl transferase; part of the gene cluster that mediates the biosynthesis of the indole diterpenes penitrems. The geranylgeranyl diphosphate (GGPP) synthase ptmG catalyzes the first step in penitrem biosynthesis via conversion of farnesyl pyrophosphate and isopentyl pyrophosphate into geranylgeranyl pyrophosphate (GGPP). Condensation of indole-3-glycerol phosphate with GGPP by the prenyl transferase ptmC then forms 3-geranylgeranylindole (3-GGI). Epoxidation by the FAD-dependent monooxygenase ptmM leads to a epoxidized-GGI that is substrate of the terpene cyclase ptmB for cyclization to yield paspaline. Paspaline is subsequently converted to 13-desoxypaxilline by the cytochrome P450 monooxygenase ptmP, the latter being then converted to paxilline by the cytochrome P450 monooxygenase ptmQ. Paxilline is converted to beta-paxitriol via C-10 ketoreduction by the short-chain dehydrogenase ptmH which can be monoprenylated at the C-20 by the indole diterpene prenyltransferase ptmD. A two-step elimination (acetylation and elimination) process performed by the O-acetyltransferase ptmV and ptmI leads to the production of the prenylated form of penijanthine. The FAD-linked oxidoreductase ptmO then converts the prenylated form of penijanthine into PC-M5 which is in turn transformed into PC-M4 by the aromatic dimethylallyltransferase ptmE. Five sequential oxidative transformations performed by the cytochrome P450 monooxygenases ptmK, ptmU, ptmL, ptmN and ptmJ yield the various penitrem compounds. PtmK, ptmU and ptmM are involved in the formation of the key bicyclic ring of penitrem C via the formation of the intermediates secopenitrem D and penitrem D. PtmL catalyzes the epoxidation of penitrem D and C to yield penitrem B and F, respectively. PtmJ catalyzes the last benzylic hydroxylation to convert penitrem B to prenitrem E and penitrem F to penitrem A. This Penicillium ochrochloron protein is Aromatic prenyl transferase ptmE.